The chain runs to 187 residues: tRNA (mnm(5)s(2)U34)-methyltransferase (187 aa).

S-adenosyl-L-methionine-binding residues include asparagine 31, asparagine 33, aspartate 51, glutamine 53, histidine 77, and glutamate 78.

It belongs to the methyltransferase superfamily. MnmM family. In terms of assembly, homodimer.

It carries out the reaction 5-aminomethyl-2-thiouridine(34) in tRNA + S-adenosyl-L-methionine = 5-methylaminomethyl-2-thiouridine(34) in tRNA + S-adenosyl-L-homocysteine + H(+). Its pathway is tRNA modification. Functionally, involved in the biosynthesis of 5-methylaminomethyl-2-thiouridine (mnm(5)s(2)U) at the wobble position (U34) in tRNA. Catalyzes the transfer of a methyl group from S-adenosyl-L-methionine to nm(5)s(2)U34 to form mnm(5)s(2)U34. This chain is tRNA (mnm(5)s(2)U34)-methyltransferase, found in Staphylococcus aureus (strain NCTC 8325 / PS 47).